The chain runs to 111 residues: Notch-regulated ankyrin repeat-containing protein B (111 aa).

2 ANK repeats span residues 47 to 76 (EGQT…DTRL) and 80 to 109 (DGWS…YSSS).

This sequence belongs to the NRARP family.

In terms of biological role, regulates independently canonical Wnt and Notch signaling by modulating LEF1 and Notch protein turnover. Stabilizes LEF1, a pivotal transcription factor in the Wnt signaling cascade, by blocking its ubiquitination. Involved in angiogenesis; involved in intersegmental vessel patterning during development. In Danio rerio (Zebrafish), this protein is Notch-regulated ankyrin repeat-containing protein B (nrarpb).